Consider the following 200-residue polypeptide: dITP/XTP pyrophosphatase (200 aa).

7–12 (TSNKHK) is a binding site for substrate. Positions 38 and 73 each coordinate Mg(2+). Residue D73 is the Proton acceptor of the active site. Substrate contacts are provided by residues S74, 154–157 (FGYD), K177, and 182–183 (HR).

The protein belongs to the HAM1 NTPase family. In terms of assembly, homodimer. Mg(2+) is required as a cofactor.

The enzyme catalyses XTP + H2O = XMP + diphosphate + H(+). The catalysed reaction is dITP + H2O = dIMP + diphosphate + H(+). It catalyses the reaction ITP + H2O = IMP + diphosphate + H(+). Pyrophosphatase that catalyzes the hydrolysis of nucleoside triphosphates to their monophosphate derivatives, with a high preference for the non-canonical purine nucleotides XTP (xanthosine triphosphate), dITP (deoxyinosine triphosphate) and ITP. Seems to function as a house-cleaning enzyme that removes non-canonical purine nucleotides from the nucleotide pool, thus preventing their incorporation into DNA/RNA and avoiding chromosomal lesions. This is dITP/XTP pyrophosphatase from Campylobacter jejuni subsp. jejuni serotype O:6 (strain 81116 / NCTC 11828).